A 121-amino-acid chain; its full sequence is Large ribosomal subunit protein bL12 (121 aa).

Belongs to the bacterial ribosomal protein bL12 family. Homodimer. Part of the ribosomal stalk of the 50S ribosomal subunit. Forms a multimeric L10(L12)X complex, where L10 forms an elongated spine to which 2 to 4 L12 dimers bind in a sequential fashion. Binds GTP-bound translation factors.

In terms of biological role, forms part of the ribosomal stalk which helps the ribosome interact with GTP-bound translation factors. Is thus essential for accurate translation. The protein is Large ribosomal subunit protein bL12 of Pseudomonas fluorescens (strain SBW25).